A 131-amino-acid chain; its full sequence is MARQPTKKTGPKKQKKNVPNGVAYIQSTFNNTIVTIADLNGEVISWASAGSSGFKGAKKGTPFAAQTAAESAARRANDQGMRQVQVMVSGPGAGRETAIRALQGAGLEITLIRDITPIPHNGCRPPKRRRV.

It belongs to the universal ribosomal protein uS11 family. In terms of assembly, part of the 30S ribosomal subunit. Interacts with proteins S7 and S18. Binds to IF-3.

Located on the platform of the 30S subunit, it bridges several disparate RNA helices of the 16S rRNA. Forms part of the Shine-Dalgarno cleft in the 70S ribosome. This chain is Small ribosomal subunit protein uS11, found in Trichodesmium erythraeum (strain IMS101).